The primary structure comprises 408 residues: Histidine--tRNA ligase (408 aa).

This sequence belongs to the class-II aminoacyl-tRNA synthetase family. Homodimer.

It localises to the cytoplasm. The enzyme catalyses tRNA(His) + L-histidine + ATP = L-histidyl-tRNA(His) + AMP + diphosphate + H(+). This Campylobacter jejuni subsp. doylei (strain ATCC BAA-1458 / RM4099 / 269.97) protein is Histidine--tRNA ligase.